Here is a 176-residue protein sequence, read N- to C-terminus: Ribosome maturation factor RimM (176 aa).

Residues 97-176 (EDEFYWRDLI…QILVDWDPDF (80 aa)) enclose the PRC barrel domain.

Belongs to the RimM family. As to quaternary structure, binds ribosomal protein uS19.

It is found in the cytoplasm. In terms of biological role, an accessory protein needed during the final step in the assembly of 30S ribosomal subunit, possibly for assembly of the head region. Essential for efficient processing of 16S rRNA. May be needed both before and after RbfA during the maturation of 16S rRNA. It has affinity for free ribosomal 30S subunits but not for 70S ribosomes. This Shewanella putrefaciens (strain CN-32 / ATCC BAA-453) protein is Ribosome maturation factor RimM.